We begin with the raw amino-acid sequence, 293 residues long: Small ribosomal subunit biogenesis GTPase RsgA (293 aa).

Residues 63–223 form the CP-type G domain; sequence QNELVRPPIA…VADTPGFSAL (161 aa). GTP-binding positions include 112–115 and 166–174; these read SKID and GQSGVGKSS. Cysteine 247, cysteine 252, histidine 254, and cysteine 260 together coordinate Zn(2+).

Belongs to the TRAFAC class YlqF/YawG GTPase family. RsgA subfamily. Monomer. Associates with 30S ribosomal subunit, binds 16S rRNA. Requires Zn(2+) as cofactor.

The protein resides in the cytoplasm. Its function is as follows. One of several proteins that assist in the late maturation steps of the functional core of the 30S ribosomal subunit. Helps release RbfA from mature subunits. May play a role in the assembly of ribosomal proteins into the subunit. Circularly permuted GTPase that catalyzes slow GTP hydrolysis, GTPase activity is stimulated by the 30S ribosomal subunit. The polypeptide is Small ribosomal subunit biogenesis GTPase RsgA (Geobacillus kaustophilus (strain HTA426)).